An 899-amino-acid polypeptide reads, in one-letter code: Receptor-like protein kinase At3g21340 (899 aa).

Positions 1 to 27 are cleaved as a signal peptide; that stretch reads MEYHPQAIRLCALIFISFYALLHLVEA. The Extracellular segment spans residues 28 to 522; it reads QDQKGFISLD…GAKKMNVVIP (495 aa). N-linked (GlcNAc...) asparagine glycans are attached at residues asparagine 100, asparagine 146, asparagine 185, asparagine 240, asparagine 266, asparagine 420, asparagine 436, asparagine 449, asparagine 468, and asparagine 475. LRR repeat units lie at residues 415–438, 439–461, and 463–485; these read IVTS…QNLT, HLQE…LADI, and SLLV…LLQK. The helical transmembrane segment at 523 to 543 threads the bilayer; the sequence is IVASVAFVVVLGSALAFFFIF. The Cytoplasmic portion of the chain corresponds to 544-899; that stretch reads KKKKTSNSQD…FDIGATPDAR (356 aa). Threonine 583 carries the post-translational modification Phosphothreonine. One can recognise a Protein kinase domain in the interval 592 to 865; it reads NNFERVLGKG…QVVIELNECL (274 aa). Residues 598–606 and lysine 620 contribute to the ATP site; that span reads LGKGGFGMV. Tyrosine 665 carries the phosphotyrosine modification. The Proton acceptor role is filled by aspartate 717. A Phosphoserine modification is found at serine 751. Phosphothreonine occurs at positions 752 and 757. Tyrosine 765 is modified (phosphotyrosine).

This sequence belongs to the protein kinase superfamily. Ser/Thr protein kinase family. In terms of processing, autophosphorylated on Tyr and Thr residues.

The protein resides in the cell membrane. The catalysed reaction is L-seryl-[protein] + ATP = O-phospho-L-seryl-[protein] + ADP + H(+). It catalyses the reaction L-threonyl-[protein] + ATP = O-phospho-L-threonyl-[protein] + ADP + H(+). It carries out the reaction L-tyrosyl-[protein] + ATP = O-phospho-L-tyrosyl-[protein] + ADP + H(+). Its function is as follows. Probable receptor with a dual specificity kinase activity acting on both serine/threonine- and tyrosine-containing substrates. The polypeptide is Receptor-like protein kinase At3g21340 (Arabidopsis thaliana (Mouse-ear cress)).